We begin with the raw amino-acid sequence, 375 residues long: Alcohol dehydrogenase 1 (375 aa).

N-acetylserine is present on serine 2. The Zn(2+) site is built by cysteine 47, histidine 68, cysteine 98, cysteine 101, cysteine 104, cysteine 112, and cysteine 175. NAD(+) is bound by residues 200-205 (WSGRVG), aspartate 224, and lysine 229. The residue at position 234 (lysine 234) is an N6-succinyllysine. 293–295 (VGV) lines the NAD(+) pocket. Lysine 340 carries the post-translational modification N6-succinyllysine. Arginine 370 is an NAD(+) binding site.

It belongs to the zinc-containing alcohol dehydrogenase family. Class-I subfamily. Homodimer. Zn(2+) is required as a cofactor.

It is found in the cytoplasm. It catalyses the reaction a primary alcohol + NAD(+) = an aldehyde + NADH + H(+). It carries out the reaction a secondary alcohol + NAD(+) = a ketone + NADH + H(+). The polypeptide is Alcohol dehydrogenase 1 (ADH1) (Geomys bursarius (Plains pocket gopher)).